A 142-amino-acid polypeptide reads, in one-letter code: Large ribosomal subunit protein uL11 (142 aa).

This sequence belongs to the universal ribosomal protein uL11 family. As to quaternary structure, part of the ribosomal stalk of the 50S ribosomal subunit. Interacts with L10 and the large rRNA to form the base of the stalk. L10 forms an elongated spine to which L12 dimers bind in a sequential fashion forming a multimeric L10(L12)X complex. One or more lysine residues are methylated.

In terms of biological role, forms part of the ribosomal stalk which helps the ribosome interact with GTP-bound translation factors. This chain is Large ribosomal subunit protein uL11, found in Bartonella henselae (strain ATCC 49882 / DSM 28221 / CCUG 30454 / Houston 1) (Rochalimaea henselae).